Here is an 806-residue protein sequence, read N- to C-terminus: Glycerol-3-phosphate acyltransferase (806 aa).

Residues Cys-305 to Met-310 carry the HXXXXD motif motif.

The protein belongs to the GPAT/DAPAT family.

Its subcellular location is the cell inner membrane. The catalysed reaction is sn-glycerol 3-phosphate + an acyl-CoA = a 1-acyl-sn-glycero-3-phosphate + CoA. The protein operates within phospholipid metabolism; CDP-diacylglycerol biosynthesis; CDP-diacylglycerol from sn-glycerol 3-phosphate: step 1/3. This chain is Glycerol-3-phosphate acyltransferase, found in Salmonella agona (strain SL483).